We begin with the raw amino-acid sequence, 247 residues long: Probable 2-phosphosulfolactate phosphatase (247 aa).

It belongs to the ComB family. Mg(2+) is required as a cofactor.

The catalysed reaction is (2R)-O-phospho-3-sulfolactate + H2O = (2R)-3-sulfolactate + phosphate. The polypeptide is Probable 2-phosphosulfolactate phosphatase (Clostridium perfringens (strain SM101 / Type A)).